Reading from the N-terminus, the 393-residue chain is Tryptophan synthase beta chain (393 aa).

An N6-(pyridoxal phosphate)lysine modification is found at K85.

This sequence belongs to the TrpB family. As to quaternary structure, tetramer of two alpha and two beta chains. Pyridoxal 5'-phosphate is required as a cofactor.

It carries out the reaction (1S,2R)-1-C-(indol-3-yl)glycerol 3-phosphate + L-serine = D-glyceraldehyde 3-phosphate + L-tryptophan + H2O. It participates in amino-acid biosynthesis; L-tryptophan biosynthesis; L-tryptophan from chorismate: step 5/5. The beta subunit is responsible for the synthesis of L-tryptophan from indole and L-serine. In Helicobacter pylori (strain J99 / ATCC 700824) (Campylobacter pylori J99), this protein is Tryptophan synthase beta chain (trpB).